Here is a 162-residue protein sequence, read N- to C-terminus: Phosphopantetheine adenylyltransferase (162 aa).

Substrate is bound at residue T9. ATP-binding positions include 9-10 and H17; that span reads TF. K41, L76, and R90 together coordinate substrate. ATP is bound by residues 91-93, E101, and 126-132; these read GLR and HQAIASR.

The protein belongs to the bacterial CoaD family. In terms of assembly, homohexamer. Requires Mg(2+) as cofactor.

It localises to the cytoplasm. The catalysed reaction is (R)-4'-phosphopantetheine + ATP + H(+) = 3'-dephospho-CoA + diphosphate. Its pathway is cofactor biosynthesis; coenzyme A biosynthesis; CoA from (R)-pantothenate: step 4/5. In terms of biological role, reversibly transfers an adenylyl group from ATP to 4'-phosphopantetheine, yielding dephospho-CoA (dPCoA) and pyrophosphate. The polypeptide is Phosphopantetheine adenylyltransferase (Caulobacter sp. (strain K31)).